Consider the following 244-residue polypeptide: Mediator of RNA polymerase II transcription subunit 9 (244 aa).

Over residues 1 to 10 the composition is skewed to gly residues; that stretch reads MDQFSGGGGN. Disordered regions lie at residues 1-28 and 96-131; these read MDQF…TPTN and QQRL…HTPQ. Over residues 13 to 28 the composition is skewed to polar residues; sequence MIPNVQAQGNFGTPTN. Low complexity-rich tracts occupy residues 96 to 111 and 122 to 131; these read QQRL…QSLQ and TPQSMMHTPQ. Residues 212 to 239 are a coiled coil; that stretch reads KRNVEESEQLLQQRRDLIVEYRKSIEEI.

It belongs to the plant Mediator complex subunit 9 family. As to quaternary structure, component of the Mediator complex. Interacts with MEE14/CBP1.

Its subcellular location is the nucleus. Functionally, component of the Mediator complex, a coactivator involved in the regulated transcription of nearly all RNA polymerase II-dependent genes. Mediator functions as a bridge to convey information from gene-specific regulatory proteins to the basal RNA polymerase II transcription machinery. The Mediator complex, having a compact conformation in its free form, is recruited to promoters by direct interactions with regulatory proteins and serves for the assembly of a functional pre-initiation complex with RNA polymerase II and the general transcription factors. This chain is Mediator of RNA polymerase II transcription subunit 9 (MED9), found in Arabidopsis thaliana (Mouse-ear cress).